Here is a 101-residue protein sequence, read N- to C-terminus: NAD(P)H-quinone oxidoreductase subunit 4L, chloroplastic (101 aa).

Transmembrane regions (helical) follow at residues 2-22, 32-52, and 61-81; these read MLEH…YGLI, MCLE…SDFF, and IFSI…SAIV.

This sequence belongs to the complex I subunit 4L family. As to quaternary structure, NDH is composed of at least 16 different subunits, 5 of which are encoded in the nucleus.

It localises to the plastid. The protein localises to the chloroplast thylakoid membrane. The enzyme catalyses a plastoquinone + NADH + (n+1) H(+)(in) = a plastoquinol + NAD(+) + n H(+)(out). It carries out the reaction a plastoquinone + NADPH + (n+1) H(+)(in) = a plastoquinol + NADP(+) + n H(+)(out). NDH shuttles electrons from NAD(P)H:plastoquinone, via FMN and iron-sulfur (Fe-S) centers, to quinones in the photosynthetic chain and possibly in a chloroplast respiratory chain. The immediate electron acceptor for the enzyme in this species is believed to be plastoquinone. Couples the redox reaction to proton translocation, and thus conserves the redox energy in a proton gradient. This is NAD(P)H-quinone oxidoreductase subunit 4L, chloroplastic from Gossypium barbadense (Sea Island cotton).